The sequence spans 262 residues: Mediator of RNA polymerase II transcription subunit 8 (262 aa).

The stretch at 168–211 (LEEKEMGVKNVITGLKRQLDEGDEEDEEEEEEEEDMQGEEMEVV) forms a coiled coil. Positions 183 to 206 (KRQLDEGDEEDEEEEEEEEDMQGE) are disordered. Over residues 188-206 (EGDEEDEEEEEEEEDMQGE) the composition is skewed to acidic residues.

The protein belongs to the Mediator complex subunit 8 family. Component of the Mediator complex.

It is found in the nucleus. Functionally, component of the Mediator complex, a coactivator involved in the regulated transcription of nearly all RNA polymerase II-dependent genes. Mediator functions as a bridge to convey information from gene-specific regulatory proteins to the basal RNA polymerase II transcription machinery. Mediator is recruited to promoters by direct interactions with regulatory proteins and serves as a scaffold for the assembly of a functional preinitiation complex with RNA polymerase II and the general transcription factors. This Coccidioides immitis (strain RS) (Valley fever fungus) protein is Mediator of RNA polymerase II transcription subunit 8 (MED8).